Reading from the N-terminus, the 144-residue chain is D-aminoacyl-tRNA deacylase (144 aa).

A Gly-cisPro motif, important for rejection of L-amino acids motif is present at residues 137-138 (GP).

The protein belongs to the DTD family. In terms of assembly, homodimer.

The protein resides in the cytoplasm. It carries out the reaction glycyl-tRNA(Ala) + H2O = tRNA(Ala) + glycine + H(+). The enzyme catalyses a D-aminoacyl-tRNA + H2O = a tRNA + a D-alpha-amino acid + H(+). An aminoacyl-tRNA editing enzyme that deacylates mischarged D-aminoacyl-tRNAs. Also deacylates mischarged glycyl-tRNA(Ala), protecting cells against glycine mischarging by AlaRS. Acts via tRNA-based rather than protein-based catalysis; rejects L-amino acids rather than detecting D-amino acids in the active site. By recycling D-aminoacyl-tRNA to D-amino acids and free tRNA molecules, this enzyme counteracts the toxicity associated with the formation of D-aminoacyl-tRNA entities in vivo and helps enforce protein L-homochirality. In Acinetobacter baumannii (strain SDF), this protein is D-aminoacyl-tRNA deacylase.